The chain runs to 233 residues: UPF0758 protein RoseRS_0767 (233 aa).

One can recognise an MPN domain in the interval 107 to 229 (LIRSPTDAAQ…FVSMRERGLG (123 aa)). 3 residues coordinate Zn(2+): His178, His180, and Asp191. Positions 178 to 191 (HNHPSGDPTPSPED) match the JAMM motif motif.

It belongs to the UPF0758 family.

The chain is UPF0758 protein RoseRS_0767 from Roseiflexus sp. (strain RS-1).